A 316-amino-acid polypeptide reads, in one-letter code: Olfactory receptor 56B2 (316 aa).

The Extracellular segment spans residues M1–H32. An N-linked (GlcNAc...) asparagine glycan is attached at N10. Residues W33–L53 form a helical membrane-spanning segment. Residues I54–A61 lie on the Cytoplasmic side of the membrane. Residues L62–T82 traverse the membrane as a helical segment. Over T83 to A106 the chain is Extracellular. The cysteines at positions 104 and 196 are disulfide-linked. Residues Q107–I127 form a helical membrane-spanning segment. The Cytoplasmic segment spans residues D128–S146. Residues F147–P167 traverse the membrane as a helical segment. At L168–S203 the chain is on the extracellular side. A helical transmembrane segment spans residues I204–S224. Over Y225 to A244 the chain is Cytoplasmic. The helical transmembrane segment at L245–I265 threads the bilayer. The Extracellular segment spans residues S266–P279. The chain crosses the membrane as a helical span at residues V280–L300. The Cytoplasmic portion of the chain corresponds to K301–E316.

The protein belongs to the G-protein coupled receptor 1 family.

Its subcellular location is the cell membrane. Odorant receptor. In Homo sapiens (Human), this protein is Olfactory receptor 56B2.